Consider the following 142-residue polypeptide: Large ribosomal subunit protein uL11 (142 aa).

It belongs to the universal ribosomal protein uL11 family. Part of the ribosomal stalk of the 50S ribosomal subunit. Interacts with L10 and the large rRNA to form the base of the stalk. L10 forms an elongated spine to which L12 dimers bind in a sequential fashion forming a multimeric L10(L12)X complex. In terms of processing, one or more lysine residues are methylated.

Its function is as follows. Forms part of the ribosomal stalk which helps the ribosome interact with GTP-bound translation factors. This Photorhabdus laumondii subsp. laumondii (strain DSM 15139 / CIP 105565 / TT01) (Photorhabdus luminescens subsp. laumondii) protein is Large ribosomal subunit protein uL11.